The chain runs to 613 residues: RNA polymerase-associated protein RTF1 homolog (613 aa).

Disordered regions lie at residues 1–90 (MSSS…DKAR) and 121–247 (QQLA…KDKI). A compositionally biased stretch (basic residues) spans 55 to 68 (PAKKKTLTKRKRRA). Residues 72–81 (SDDDQVDDDL) show a composition bias toward acidic residues. Over residues 167–176 (AAFHRPSDIN) the composition is skewed to basic and acidic residues. A coiled-coil region spans residues 175-209 (INRKHKEKNAMDALKNKRKEIEKKNAKNEALSIDA). Positions 215–235 (SGSSSSSSSSESSRSSSSSRE) are enriched in low complexity. The segment covering 236–247 (SSPERVSEKDKI) has biased composition (basic and acidic residues). The 132-residue stretch at 252-383 (VDGLSELRRA…KKQDIEKAIN (132 aa)) folds into the Plus3 domain. Positions 425–462 (RGDIREAEQIQTKIDEIERQADELEKERSKSISAIAFI) form a coiled coil. 2 disordered regions span residues 485–549 (SQDD…KTDI) and 564–613 (LKDF…SSAV). Residues 510–521 (TLSASSSTTNLS) show a composition bias toward low complexity. Over residues 569–586 (TPESSGNKRPSISSSKGV) the composition is skewed to polar residues. A compositionally biased stretch (low complexity) spans 602–613 (GSSTSAAPSSAV).

In terms of assembly, component of the PAF1 complex which consists of at least cdc-73, ctr-9, leo-1, pafo-1 and rtfo-1.

It is found in the nucleus. In terms of biological role, component of the PAF1 complex which is a multifunctional complex involved in transcription initiation via genetic interactions with TATA-binding proteins, elongation and transcription-coupled histone modification. The chain is RNA polymerase-associated protein RTF1 homolog from Caenorhabditis elegans.